A 470-amino-acid chain; its full sequence is Uronate isomerase (470 aa).

The protein belongs to the metallo-dependent hydrolases superfamily. Uronate isomerase family.

It catalyses the reaction D-glucuronate = D-fructuronate. The enzyme catalyses aldehydo-D-galacturonate = keto-D-tagaturonate. It functions in the pathway carbohydrate metabolism; pentose and glucuronate interconversion. In Salmonella agona (strain SL483), this protein is Uronate isomerase.